The chain runs to 505 residues: Putative pentatricopeptide repeat-containing protein At1g26500 (505 aa).

PPR repeat units follow at residues 145–179 (NDKT…GYLY), 180–210 (NVET…LKEF), 214–248 (DEIT…GFDV), 249–279 (DIEA…MVSK), 285–319 (DGGF…GVYV), 320–350 (DNLT…VENP), and 351–385 (DISI…GCEP).

Belongs to the PPR family. P subfamily.

The protein is Putative pentatricopeptide repeat-containing protein At1g26500 of Arabidopsis thaliana (Mouse-ear cress).